Reading from the N-terminus, the 364-residue chain is Phosphoserine aminotransferase (364 aa).

R46 contributes to the L-glutamate binding site. Pyridoxal 5'-phosphate contacts are provided by residues 80–81, W106, T157, D176, and Q199; that span reads AR. Residue K200 is modified to N6-(pyridoxal phosphate)lysine. Residue 241–242 coordinates pyridoxal 5'-phosphate; the sequence is NT.

This sequence belongs to the class-V pyridoxal-phosphate-dependent aminotransferase family. SerC subfamily. As to quaternary structure, homodimer. Requires pyridoxal 5'-phosphate as cofactor.

The protein resides in the cytoplasm. The catalysed reaction is O-phospho-L-serine + 2-oxoglutarate = 3-phosphooxypyruvate + L-glutamate. It carries out the reaction 4-(phosphooxy)-L-threonine + 2-oxoglutarate = (R)-3-hydroxy-2-oxo-4-phosphooxybutanoate + L-glutamate. It functions in the pathway amino-acid biosynthesis; L-serine biosynthesis; L-serine from 3-phospho-D-glycerate: step 2/3. The protein operates within cofactor biosynthesis; pyridoxine 5'-phosphate biosynthesis; pyridoxine 5'-phosphate from D-erythrose 4-phosphate: step 3/5. Its function is as follows. Catalyzes the reversible conversion of 3-phosphohydroxypyruvate to phosphoserine and of 3-hydroxy-2-oxo-4-phosphonooxybutanoate to phosphohydroxythreonine. This chain is Phosphoserine aminotransferase, found in Vibrio vulnificus (strain YJ016).